The chain runs to 614 residues: Vitamin B12 transporter BtuB (614 aa).

Residues 1–20 form the signal peptide; that stretch reads MIKKASLLTACSVTAFSAWA. A TonB box motif is present at residues 26 to 33; it reads DTLVVTAN. The TBDR plug domain occupies 38–152; that stretch reads PRSTVLAPTT…IGGVVNIITT (115 aa). Residues Leu-83, Ser-85, Asn-92, and 110 to 111 each bind cyanocob(III)alamin; that span reads VS. A TBDR beta-barrel domain is found at 155–614; the sequence is EPGTEISAGW…EYTLSGSYTF (460 aa). Transmembrane regions (beta stranded) follow at residues 158–165, 169–178, and 184–195; these read TEISAGWG, YQNYDVSTQQ, and TRVTLLGDYAHT. Ca(2+) is bound by residues Asp-199, Gln-211, Asp-213, and Asp-215. Beta stranded transmembrane passes span 217-227 and 232-248; these read FLSKTLYGALE and DAWS…NRTN. 2 residues coordinate Ca(2+): Tyr-249 and Asp-250. Position 251 (Ala-251) interacts with cyanocob(III)alamin. Asp-261 provides a ligand contact to Ca(2+). 14 beta stranded membrane-spanning segments follow: residues 263 to 277, 279 to 296, 309 to 325, 328 to 337, 353 to 369, 371 to 381, 385 to 400, 403 to 417, 434 to 443, 449 to 458, 473 to 490, 494 to 509, 517 to 529, and 535 to 550; these read RKLY…LRYN, ELIK…KDYN, TLDE…NNII, HGNVGAGVDW, YDQR…QQVG, FTFEGAARSDD, FGRH…WEFI, YRFI…KAPN, KSKQWEGAFE, VNWRISGYRN, YYNE…TANF, PLTH…ARNA, RRAK…QLDW, and DWGI…YDKD. Cyanocob(III)alamin is bound at residue Thr-309. Residue Arg-517 participates in cyanocob(III)alamin binding. Tyr-551 is a cyanocob(III)alamin binding site. A run of 3 beta stranded transmembrane segments spans residues 558–572, 585–596, and 602–614; these read TVKM…LAVA, IANLFDKDYETV, and AGRE…SYTF. The short motif at 597–614 is the TonB C-terminal box element; that stretch reads YGYQTAGREYTLSGSYTF.

Belongs to the TonB-dependent receptor family. BtuB (TC 1.B.14.3.1) subfamily.

The protein localises to the cell outer membrane. In terms of biological role, involved in the active translocation of vitamin B12 (cyanocobalamin) across the outer membrane to the periplasmic space. It derives its energy for transport by interacting with the trans-periplasmic membrane protein TonB. The protein is Vitamin B12 transporter BtuB of Shigella dysenteriae serotype 1 (strain Sd197).